The sequence spans 617 residues: MRKTFLAITCASLLSPTFYSQAQEVSADETVVVTANRFKQIDGAVLAQTVTVTKEDIKRLQANSLFDVFRTLPSVEVAQYGGRGQSASIYVRGGSSSQVLVLVDGVRMPRAIMGGIDFNQFPINSVERIDYIRGARASIYGSEAISGVINIITRAPINDDSGRVSAGYGSNNHKKGTFVVSKPVGEGKHFKGVLGYEKTDGFNVKPQPGLNDGDEHGFETLNLKLGYQQNFSDNLSGYVGVSAYNNEYDYDNSSIWSGHEKKTGEVEYVGTDLSLEYNKDVYSSELKLAYGQQDNYDHKSGQNKSTGDHVAIEQFNAIWLNSYSVNEELSIGGGLDYRTEKLAKGYIAPSDRGPAKDYDPEKNPRTNFGVSAIAQYAYDVWTLEASVRNDDNNQFGNNTTWQTAAGWSFYEGYELTLSHGTAFRAPSFVDLYYPGYEMPNLKPEESENTELSLSGAVSIVDWTVTGYYNEIENMLIWEGAGMQNVGEAEIKGVELEVKLDTDIVSHEFYLDYKDPVDKSGAEDTQLAYRSKRGAKWNAYATFDQWTLGSQYLYQGERFNGSTRLPSYSLWNFTASYAVNQNWDINAKLSNAFDKDYEMYVGYVTPGRQYFVSADYRF.

The signal sequence occupies residues 1 to 22 (MRKTFLAITCASLLSPTFYSQA). The short motif at 29-36 (ETVVVTAN) is the TonB box element. A TBDR plug domain is found at 40–154 (QIDGAVLAQT…ISGVINIITR (115 aa)). Positions 159–617 (DDSGRVSAGY…QYFVSADYRF (459 aa)) constitute a TBDR beta-barrel domain. The short motif at 600 to 617 (VGYVTPGRQYFVSADYRF) is the TonB C-terminal box element.

This sequence belongs to the TonB-dependent receptor family. BtuB (TC 1.B.14.3.1) subfamily.

The protein resides in the cell outer membrane. In terms of biological role, involved in the active translocation of vitamin B12 (cyanocobalamin) across the outer membrane to the periplasmic space. It derives its energy for transport by interacting with the trans-periplasmic membrane protein TonB. This chain is Vitamin B12 transporter BtuB, found in Vibrio campbellii (strain ATCC BAA-1116).